A 270-amino-acid polypeptide reads, in one-letter code: 3-phenylpropionate-dihydrodiol/cinnamic acid-dihydrodiol dehydrogenase (270 aa).

NAD(+) is bound at residue 10–34 (FITGGGSGLGLALVERFIEEGAQVA). Ser143 contacts substrate. Tyr156 serves as the catalytic Proton acceptor.

Belongs to the short-chain dehydrogenases/reductases (SDR) family.

The catalysed reaction is 3-(cis-5,6-dihydroxycyclohexa-1,3-dien-1-yl)propanoate + NAD(+) = 3-(2,3-dihydroxyphenyl)propanoate + NADH + H(+). The enzyme catalyses (2E)-3-(cis-5,6-dihydroxycyclohexa-1,3-dien-1-yl)prop-2-enoate + NAD(+) = (2E)-3-(2,3-dihydroxyphenyl)prop-2-enoate + NADH + H(+). It functions in the pathway aromatic compound metabolism; 3-phenylpropanoate degradation. In terms of biological role, converts 3-phenylpropionate-dihydrodiol (PP-dihydrodiol) and cinnamic acid-dihydrodiol (CI-dihydrodiol) into 3-(2,3-dihydroxylphenyl)propanoic acid (DHPP) and 2,3-dihydroxicinnamic acid (DHCI), respectively. The polypeptide is 3-phenylpropionate-dihydrodiol/cinnamic acid-dihydrodiol dehydrogenase (Escherichia coli (strain SMS-3-5 / SECEC)).